A 467-amino-acid chain; its full sequence is Mitochondrial distribution and morphology protein 10 (467 aa).

The interval 361–393 is disordered; sequence GLPDTAPSRNRECDDLPPPRRDNYHHQRSPHAS. The segment covering 369–385 has biased composition (basic and acidic residues); it reads RNRECDDLPPPRRDNYH.

The protein belongs to the MDM10 family. Component of the ER-mitochondria encounter structure (ERMES) or MDM complex, composed of MMM1, MDM10, MDM12 and MDM34. Associates with the mitochondrial outer membrane sorting assembly machinery SAM(core) complex.

Its subcellular location is the mitochondrion outer membrane. Its function is as follows. Component of the ERMES/MDM complex, which serves as a molecular tether to connect the endoplasmic reticulum and mitochondria. Components of this complex are involved in the control of mitochondrial shape and protein biogenesis and may function in phospholipid exchange. MDM10 is involved in the late assembly steps of the general translocase of the mitochondrial outer membrane (TOM complex). Functions in the TOM40-specific route of the assembly of outer membrane beta-barrel proteins, including the association of TOM40 with the receptor TOM22 and small TOM proteins. Can associate with the SAM(core) complex as well as the MDM12-MMM1 complex, both involved in late steps of the major beta-barrel assembly pathway, that is responsible for biogenesis of all outer membrane beta-barrel proteins. May act as a switch that shuttles between both complexes and channels precursor proteins into the TOM40-specific pathway. Plays a role in mitochondrial morphology and in the inheritance of mitochondria. The protein is Mitochondrial distribution and morphology protein 10 of Ajellomyces capsulatus (strain NAm1 / WU24) (Darling's disease fungus).